The sequence spans 605 residues: Mini-chromosome maintenance complex-binding protein (605 aa).

Phosphoserine is present on residues Ser-147 and Ser-150.

It belongs to the MCMBP family. In terms of assembly, interacts with the MCM complex.

The protein localises to the nucleus. Functionally, associated component of the MCM complex that acts as a regulator of DNA replication. Binds to the MCM complex during late S phase and may act by promoting the disassembly of the MCM complex from chromatin. The sequence is that of Mini-chromosome maintenance complex-binding protein from Drosophila melanogaster (Fruit fly).